The chain runs to 306 residues: Dihydroorotate dehydrogenase B (NAD(+)), catalytic subunit (306 aa).

Residues S22 and 46 to 47 each bind FMN; that span reads KG. Residues K46 and 70-74 each bind substrate; that span reads NAIGL. FMN is bound by residues N100 and N128. N128 serves as a coordination point for substrate. The active-site Nucleophile is the C131. K167 and I193 together coordinate FMN. 194–195 contributes to the substrate binding site; the sequence is NT. FMN is bound by residues G219, 245 to 246, and 267 to 268; these read GG and GT.

The protein belongs to the dihydroorotate dehydrogenase family. Type 1 subfamily. As to quaternary structure, heterotetramer of 2 PyrK and 2 PyrD type B subunits. FMN is required as a cofactor.

The protein resides in the cytoplasm. The catalysed reaction is (S)-dihydroorotate + NAD(+) = orotate + NADH + H(+). Its pathway is pyrimidine metabolism; UMP biosynthesis via de novo pathway; orotate from (S)-dihydroorotate (NAD(+) route): step 1/1. Functionally, catalyzes the conversion of dihydroorotate to orotate with NAD(+) as electron acceptor. This is Dihydroorotate dehydrogenase B (NAD(+)), catalytic subunit (pyrD) from Solidesulfovibrio magneticus (strain ATCC 700980 / DSM 13731 / RS-1) (Desulfovibrio magneticus).